The chain runs to 335 residues: Olfactory receptor 52B6 (335 aa).

Residues 1–45 (MAQVRALHKIMALFSANSIGAMNNSDTRIAGCFLTGIPGLEQLHI) lie on the Extracellular side of the membrane. Asn23 carries an N-linked (GlcNAc...) asparagine glycan. Residues 46 to 66 (WLSIPFCIMYITALEGNGILI) traverse the membrane as a helical segment. The Cytoplasmic portion of the chain corresponds to 67 to 74 (CVILSQAI). Residues 75–95 (LHEPMYIFLSMLASADVLLST) form a helical membrane-spanning segment. Over 96-119 (TTMPKALANLWLGYSLISFDGCLT) the chain is Extracellular. Cys117 and Cys208 are disulfide-bonded. Residues 120–139 (QMFFIHFLFIHSAVLLAMAF) traverse the membrane as a helical segment. Residues 140–158 (DRYVAICSPLRYVTILTSK) lie on the Cytoplasmic side of the membrane. A helical transmembrane segment spans residues 159 to 179 (VIGKIVTAALSHSFIIMFPSI). The Extracellular portion of the chain corresponds to 180 to 215 (FLLEHLHYCQINIIAHTFCEHMGIAHLSCSDISINV). A helical transmembrane segment spans residues 216–236 (WYGLAAALLSTGLDIMLITVS). Topologically, residues 237-256 (YIHILQAVFRLLSQDARSKA) are cytoplasmic. The helical transmembrane segment at 257 to 277 (LSTCGSHICVILLFYVPALFS) threads the bilayer. Topologically, residues 278–293 (VFAYRFGGRSVPCYVH) are extracellular. Residues 294–314 (ILLASLYVVIPPMLNPVIYGV) traverse the membrane as a helical segment. Residues 315–335 (RTKPILEGAKQMFSNLAKGSK) are Cytoplasmic-facing.

The protein belongs to the G-protein coupled receptor 1 family.

The protein resides in the cell membrane. In terms of biological role, odorant receptor. This Homo sapiens (Human) protein is Olfactory receptor 52B6 (OR52B6).